The following is a 95-amino-acid chain: Aspartyl/glutamyl-tRNA(Asn/Gln) amidotransferase subunit C (95 aa).

The protein belongs to the GatC family. In terms of assembly, heterotrimer of A, B and C subunits.

It carries out the reaction L-glutamyl-tRNA(Gln) + L-glutamine + ATP + H2O = L-glutaminyl-tRNA(Gln) + L-glutamate + ADP + phosphate + H(+). It catalyses the reaction L-aspartyl-tRNA(Asn) + L-glutamine + ATP + H2O = L-asparaginyl-tRNA(Asn) + L-glutamate + ADP + phosphate + 2 H(+). In terms of biological role, allows the formation of correctly charged Asn-tRNA(Asn) or Gln-tRNA(Gln) through the transamidation of misacylated Asp-tRNA(Asn) or Glu-tRNA(Gln) in organisms which lack either or both of asparaginyl-tRNA or glutaminyl-tRNA synthetases. The reaction takes place in the presence of glutamine and ATP through an activated phospho-Asp-tRNA(Asn) or phospho-Glu-tRNA(Gln). In Geotalea uraniireducens (strain Rf4) (Geobacter uraniireducens), this protein is Aspartyl/glutamyl-tRNA(Asn/Gln) amidotransferase subunit C.